Reading from the N-terminus, the 424-residue chain is Enolase (424 aa).

A (2R)-2-phosphoglycerate-binding site is contributed by Gln-163. Catalysis depends on Glu-205, which acts as the Proton donor. Positions 242, 285, and 312 each coordinate Mg(2+). Positions 337, 366, 367, and 388 each coordinate (2R)-2-phosphoglycerate. Residue Lys-337 is the Proton acceptor of the active site.

Belongs to the enolase family. Requires Mg(2+) as cofactor.

It localises to the cytoplasm. The protein resides in the secreted. The protein localises to the cell surface. It catalyses the reaction (2R)-2-phosphoglycerate = phosphoenolpyruvate + H2O. Its pathway is carbohydrate degradation; glycolysis; pyruvate from D-glyceraldehyde 3-phosphate: step 4/5. Catalyzes the reversible conversion of 2-phosphoglycerate (2-PG) into phosphoenolpyruvate (PEP). It is essential for the degradation of carbohydrates via glycolysis. This Roseobacter denitrificans (strain ATCC 33942 / OCh 114) (Erythrobacter sp. (strain OCh 114)) protein is Enolase.